A 155-amino-acid polypeptide reads, in one-letter code: NADPH-dependent 7-cyano-7-deazaguanine reductase (155 aa).

The Thioimide intermediate role is filled by C53. The active-site Proton donor is D60. Residues 75–77 (VES) and 94–95 (HE) each bind substrate.

This sequence belongs to the GTP cyclohydrolase I family. QueF type 1 subfamily.

The protein resides in the cytoplasm. The catalysed reaction is 7-aminomethyl-7-carbaguanine + 2 NADP(+) = 7-cyano-7-deazaguanine + 2 NADPH + 3 H(+). The protein operates within tRNA modification; tRNA-queuosine biosynthesis. Its function is as follows. Catalyzes the NADPH-dependent reduction of 7-cyano-7-deazaguanine (preQ0) to 7-aminomethyl-7-deazaguanine (preQ1). The sequence is that of NADPH-dependent 7-cyano-7-deazaguanine reductase from Brucella suis (strain ATCC 23445 / NCTC 10510).